A 270-amino-acid polypeptide reads, in one-letter code: MQDSALERTRIAAVNAARAARASYRAGTVQPTAGIAPGMTQANMIALPRDWAWDFLLYAQRNPKACPVLDVIEAGAQQTVLAQGADIRTDIPLYRVWRDGKLAEEVADATPLWTEHPDLVTFLIGCSFTFETPLQEAGIEVRHIADGSNVPMYRTNRQCRPAGRLHGEMVVSMRPIPAHRVADAVSISGRFPSVHGSPVHVGDPAALGIADLARPDFGDAVRIEPGEIPVFWACGVTPQAAVMASGVPFAVTHAPGHMFITDVPDSTYHV.

It belongs to the D-glutamate cyclase family.

This Cupriavidus necator (strain ATCC 17699 / DSM 428 / KCTC 22496 / NCIMB 10442 / H16 / Stanier 337) (Ralstonia eutropha) protein is Putative hydro-lyase H16_B1759.